The chain runs to 999 residues: Signal peptide, CUB and EGF-like domain-containing protein 2 (999 aa).

Residues 1 to 31 (MGVAGRNRPGAAWAVLLLLLLLPPLLLLAGA) form the signal peptide. The 41-residue stretch at 45–85 (DVDECAQGLDDCHADALCQNTPTSYKCSCKPGYQGEGRQCE) folds into the EGF-like 1; calcium-binding domain. 6 cysteine pairs are disulfide-bonded: C49/C62, C56/C71, C73/C84, C90/C102, C98/C111, and C113/C126. One can recognise an EGF-like 2; calcium-binding domain in the interval 86–127 (DIDECGNELNGGCVHDCLNIPGNYRCTCFDGFMLAHDGHNCL). An EGF-like 3; calcium-binding domain is found at 128-168 (DVDECLENNGGCQHTCVNVMGSYECCCKEGFFLSDNQHTCI). EGF-like domains are found at residues 177–213 (CMNKDHGCSHICKEAPRGSVACECRPGFELAKNQRDC), 217–252 (CNHGNGGCQHSCDDTADGPECSCHPQYKMHTDGRSC), and 286–321 (CAVNNGGCDRTCKDTSTGVHCSCPVGFTLQLDGKTC). The region spanning 323-363 (DIDECQTRNGGCDHFCKNIVGSFDCGCKKGFKLLTDEKSCQ) is the EGF-like 7; calcium-binding domain. Positions 364–402 (DVDECSLDRTCDHSCINHPGTFACACNRGYTLYGFTHCG) constitute an EGF-like 8; calcium-binding domain. Disulfide bonds link C368-C378, C374-C387, C389-C401, C407-C418, C414-C427, and C429-C442. The 41-residue stretch at 403-443 (DTNECSINNGGCQQVCVNTVGSYECQCHPGYKLHWNKKDCV) folds into the EGF-like 9; calcium-binding domain. N-linked (GlcNAc...) asparagine glycosylation occurs at N659. An intrachain disulfide couples C809 to C835. The 113-residue stretch at 809 to 921 (CGGELGDFTG…RGFQVPYVTY (113 aa)) folds into the CUB domain. The tract at residues 847–856 (ILIVVPEIFL) is interaction with the cholesterol-anchor of SHH. C862 and C883 are disulfide-bonded.

Forms homooligomers. Forms heterooligomers with SCUBE1. Forms heterooligomers with SCUBE3. Interacts with SHH via the cholesterol anchor of the dually lipid-modified SHH (ShhNp). Interacts with PTCH1. Interacts with VEGFR2. Post-translationally, N-glycosylated. Expressed in a broad spectrum of adult tissues.

It is found in the secreted. The protein localises to the cell surface. Lipid-binding protein required for SHH long-range signaling by binding to the dually lipid-modified SHH (ShhNp) and by promoting ShhNp mobilization, solubilization and release from the cell membrane. Acts by enhancing the proteolytic processing (shedding) of the lipid-modified N- and C- terminal of ShhNp at the cell surface. Synergizes with DISP1 to increase SHH secretion. Probable cell surface coreceptor for VEGFR2 involved in VEGFR2-mediated angiogenesis. The polypeptide is Signal peptide, CUB and EGF-like domain-containing protein 2 (Homo sapiens (Human)).